Here is a 1214-residue protein sequence, read N- to C-terminus: Neuronal cell adhesion molecule (1214 aa).

Positions Met1–Ala29 are cleaved as a signal peptide. Topologically, residues Leu30 to Gln1077 are extracellular. Ig-like C2-type domains lie at Pro46–Ser134 and Pro141–Ser235. Intrachain disulfides connect Cys68-Cys123 and Cys167-Cys218. Asn83 carries N-linked (GlcNAc...) asparagine glycosylation. Asn223, Asn245, Asn251, Asn276, Asn314, and Asn377 each carry an N-linked (GlcNAc...) asparagine glycan. 4 Ig-like C2-type domains span residues Pro267 to Thr356, Pro361 to Asn448, Pro454 to Glu541, and Pro545 to Ser626. Cys292 and Cys340 are oxidised to a cystine. The cysteines at positions 382 and 432 are disulfide-linked. Residues Asn433 and Asn507 are each glycosylated (N-linked (GlcNAc...) asparagine). 2 cysteine pairs are disulfide-bonded: Cys476–Cys525 and Cys567–Cys616. N-linked (GlcNAc...) asparagine glycosylation is found at Asn619, Asn716, Asn802, Asn858, Asn993, Asn1009, and Asn1019. 4 Fibronectin type-III domains span residues Pro649–Ala744, Pro746–Asp843, Ala848–Gly950, and Ala954–Gly1051. A helical transmembrane segment spans residues Gly1078–Ile1100. The Cytoplasmic segment spans residues Arg1101–Val1214. Basic and acidic residues predominate over residues Pro1109–Asp1129. Positions Pro1109–Val1214 are disordered. At Thr1131 the chain carries Phosphothreonine. A Phosphotyrosine modification is found at Tyr1135. Ser1136 carries the phosphoserine modification. The span at Pro1151–Asp1160 shows a compositional bias: basic and acidic residues. Phosphoserine is present on residues Ser1161, Ser1164, Ser1181, Ser1200, Ser1201, and Ser1205. A compositionally biased stretch (polar residues) spans Asn1198–Val1214.

It belongs to the immunoglobulin superfamily. L1/neurofascin/NgCAM family. In terms of assembly, constituent of a NFASC/NRCAM/ankyrin-G complex. Detected in a complex with CNTN1 and PTPRB. Interacts with MYOC. Interacts with GLDN. In terms of tissue distribution, detected in cerebellum Purkinje cells. Detected on nodes of Ranvier and unmyelinated axons in sciatic nerve (at protein level).

It is found in the cell membrane. The protein localises to the cell projection. The protein resides in the axon. Its subcellular location is the secreted. In terms of biological role, cell adhesion protein that is required for normal responses to cell-cell contacts in brain and in the peripheral nervous system. Plays a role in neurite outgrowth in response to contactin binding. Plays a role in mediating cell-cell contacts between Schwann cells and axons. Plays a role in the formation and maintenance of the nodes of Ranvier on myelinated axons. Nodes of Ranvier contain clustered sodium channels that are crucial for the saltatory propagation of action potentials along myelinated axons. During development, nodes of Ranvier are formed by the fusion of two heminodes. Required for normal clustering of sodium channels at heminodes; not required for the formation of mature nodes with normal sodium channel clusters. Required, together with GLDN, for maintaining NFASC and sodium channel clusters at mature nodes of Ranvier. The chain is Neuronal cell adhesion molecule (Nrcam) from Rattus norvegicus (Rat).